A 268-amino-acid chain; its full sequence is MFLVNSFLKGGGGGGGGGGGLGGGLGNVLGGLISGAGGGGGGGGGGGGGGGGGGGGTAMRILGGVISAISEAAAQYNPEPPPPRTHYSNIEANESEEVRQFRRLFAQLAGDDMEVSATELMNILNKVVTRHPDLKTDGFGIDTCRSMVAVMDSDTTGKLGFEEFKYLWNNIKRWQAIYKQFDTDRSGTICSSELPGAFEAAGFHLNEHLYNMIIRRYSDESGNMDFDNFISCLVRLDAMFRAFKSLDKDGTGQIQVNIQEWLQLTMYS.

Methionine 1 carries the post-translational modification N-acetylmethionine. Phosphoserine is present on serine 6. Residues 91–125 (EANESEEVRQFRRLFAQLAGDDMEVSATELMNILN) enclose the EF-hand 1; atypical domain. Alanine 109, aspartate 112, glutamate 114, glutamate 119, aspartate 137, aspartate 152, aspartate 154, threonine 156, lysine 158, and glutamate 163 together coordinate Ca(2+). EF-hand domains follow at residues 139-172 (FGIDTCRSMVAVMDSDTTGKLGFEEFKYLWNNIK), 169-204 (NNIKRWQAIYKQFDTDRSGTICSSELPGAFEAAGFH), 205-233 (LNEHLYNMIIRRYSDESGNMDFDNFISCL), and 234-268 (VRLDAMFRAFKSLDKDGTGQIQVNIQEWLQLTMYS). Lysine 179 is modified (N6-acetyllysine). Aspartate 182, aspartate 184, serine 186, threonine 188, glutamate 193, and aspartate 225 together coordinate Ca(2+).

Homodimer or heterodimer of a large (catalytic) and a small (regulatory) subunit. In presence of calcium, the heterodimer dissociates.

It is found in the cytoplasm. The protein localises to the cell membrane. Regulatory subunit of the calcium-regulated non-lysosomal thiol-protease which catalyzes limited proteolysis of substrates involved in cytoskeletal remodeling and signal transduction. Essential for embryonic development. In Homo sapiens (Human), this protein is Calpain small subunit 1 (CAPNS1).